Reading from the N-terminus, the 407-residue chain is Gonadotropin-releasing hormone receptor (407 aa).

Residues 1–36 (MDYLNDSMFNNMTYNITSTPLPDAPRFDNVYVSKLC) are Extracellular-facing. 3 N-linked (GlcNAc...) asparagine glycosylation sites follow: Asn-5, Asn-11, and Asn-15. The chain crosses the membrane as a helical span at residues 37–57 (VLGTVFVISFFGNTLVIIQIF). At 58 to 69 (RIRGSRSTIQSL) the chain is on the cytoplasmic side. A helical transmembrane segment spans residues 70 to 90 (ILNLAIADLMVSFFNILMDII). At 91-105 (WSATVEWLAGNTMCK) the chain is on the extracellular side. A disulfide bridge connects residues Cys-104 and Cys-183. A helical membrane pass occupies residues 106 to 126 (IMKYLTVFGLHLSTYITVSIA). The Cytoplasmic portion of the chain corresponds to 127 to 147 (LDRCFAILSPMSRSKAPLRVR). A helical transmembrane segment spans residues 148–168 (IMITMAWVLSAIFSIPQAVIF). At 169–199 (QEQRKMFRQGMFHQCRDSYNALWQKQLYSAS) the chain is on the extracellular side. A helical membrane pass occupies residues 200-220 (SLILLFVIPLIIMVTSYLLIL). The Cytoplasmic segment spans residues 221-268 (KTIVKTSRQFHDTPISPTSMSCYSVNHGQIRTHLFERARKRSSRMSAV). A helical transmembrane segment spans residues 269-289 (IVAAFILCWTPYYIIFLGFAF). Topologically, residues 290–298 (FQWDNSRTV) are extracellular. A helical membrane pass occupies residues 299-319 (IYFFTLGTSNCMLNPLIYGAF). The Cytoplasmic segment spans residues 320–407 (TIYKVHRGRS…NGKMPTKPPG (88 aa)). Residues 377 to 407 (SLTNPHQPVRPSPGINSTTSPNGKMPTKPPG) form a disordered region.

This sequence belongs to the G-protein coupled receptor 1 family. As to expression, widely expressed in peripheral nervous tissue, gonadal tissue and brain. In the brain, expression is high in the palliovisceral lobe and superior buccal lobe but low in the subvertical lobe, superior and inferior frontal lobe, posterior brachial lobe and pedal lobe. Expressed in stomach, rectum, aorta, heart, salivary gland, branchia, pancreas, radula retractor muscle, branchial vessel but not in white body, esophagus, liver and kidney.

Its subcellular location is the cell membrane. Functionally, receptor for gonadotropin releasing hormone (GnRH) that mediates the action of GnRH to stimulate the secretion of the gonadotropic hormones luteinizing hormone (LH) and follicle-stimulating hormone (FSH). This receptor mediates its action by association with G-proteins that activate a phosphatidylinositol-calcium second messenger system. Ligand interaction triggers steroidogenesis in spermatozoa and follicles. Appears to be involved in contraction of the radula retractor muscle. This chain is Gonadotropin-releasing hormone receptor, found in Octopus vulgaris (Common octopus).